The sequence spans 233 residues: Enolase-phosphatase E1 (233 aa).

The protein belongs to the HAD-like hydrolase superfamily. MasA/MtnC family. In terms of assembly, monomer. Mg(2+) serves as cofactor.

It catalyses the reaction 5-methylsulfanyl-2,3-dioxopentyl phosphate + H2O = 1,2-dihydroxy-5-(methylsulfanyl)pent-1-en-3-one + phosphate. Its pathway is amino-acid biosynthesis; L-methionine biosynthesis via salvage pathway; L-methionine from S-methyl-5-thio-alpha-D-ribose 1-phosphate: step 3/6. It participates in amino-acid biosynthesis; L-methionine biosynthesis via salvage pathway; L-methionine from S-methyl-5-thio-alpha-D-ribose 1-phosphate: step 4/6. Functionally, bifunctional enzyme that catalyzes the enolization of 2,3-diketo-5-methylthiopentyl-1-phosphate (DK-MTP-1-P) into the intermediate 2-hydroxy-3-keto-5-methylthiopentenyl-1-phosphate (HK-MTPenyl-1-P), which is then dephosphorylated to form the acireductone 1,2-dihydroxy-3-keto-5-methylthiopentene (DHK-MTPene). In Hahella chejuensis (strain KCTC 2396), this protein is Enolase-phosphatase E1.